The following is a 218-amino-acid chain: Eukaryotic translation initiation factor 3 subunit K (218 aa).

An N-acetylalanine modification is found at alanine 2. At threonine 28 the chain carries Phosphothreonine. Positions 42-204 (YDLEANLAVL…SIKPKNIVEK (163 aa)) constitute a PCI domain. Serine 217 is subject to Phosphoserine.

It belongs to the eIF-3 subunit K family. Component of the eukaryotic translation initiation factor 3 (eIF-3) complex, which is composed of 13 subunits: EIF3A, EIF3B, EIF3C, EIF3D, EIF3E, EIF3F, EIF3G, EIF3H, EIF3I, EIF3J, EIF3K, EIF3L and EIF3M. The eIF-3 complex appears to include 3 stable modules: module A is composed of EIF3A, EIF3B, EIF3G and EIF3I; module B is composed of EIF3F, EIF3H, and EIF3M; and module C is composed of EIF3C, EIF3D, EIF3E, EIF3K and EIF3L. EIF3C of module C binds EIF3B of module A and EIF3H of module B, thereby linking the three modules. EIF3J is a labile subunit that binds to the eIF-3 complex via EIF3B. The eIF-3 complex interacts with RPS6KB1 under conditions of nutrient depletion. Mitogenic stimulation leads to binding and activation of a complex composed of MTOR and RPTOR, leading to phosphorylation and release of RPS6KB1 and binding of EIF4B to eIF-3. Interacts with CCND3, but not with CCND1 and CCND2.

The protein resides in the nucleus. Its subcellular location is the cytoplasm. Functionally, component of the eukaryotic translation initiation factor 3 (eIF-3) complex, which is required for several steps in the initiation of protein synthesis. The eIF-3 complex associates with the 40S ribosome and facilitates the recruitment of eIF-1, eIF-1A, eIF-2:GTP:methionyl-tRNAi and eIF-5 to form the 43S pre-initiation complex (43S PIC). The eIF-3 complex stimulates mRNA recruitment to the 43S PIC and scanning of the mRNA for AUG recognition. The eIF-3 complex is also required for disassembly and recycling of post-termination ribosomal complexes and subsequently prevents premature joining of the 40S and 60S ribosomal subunits prior to initiation. The eIF-3 complex specifically targets and initiates translation of a subset of mRNAs involved in cell proliferation, including cell cycling, differentiation and apoptosis, and uses different modes of RNA stem-loop binding to exert either translational activation or repression. This is Eukaryotic translation initiation factor 3 subunit K from Bos taurus (Bovine).